A 63-amino-acid polypeptide reads, in one-letter code: Large ribosomal subunit protein bL28 (63 aa).

Positions 1–20 (MSKRCAITGKGPMVGNNVSH) are disordered.

Belongs to the bacterial ribosomal protein bL28 family.

The polypeptide is Large ribosomal subunit protein bL28 (Campylobacter fetus subsp. fetus (strain 82-40)).